The sequence spans 306 residues: D-alanine--D-alanine ligase (306 aa).

The ATP-grasp domain occupies 102–300 (KIVVASVGVS…YGDIVQWMVE (199 aa)). 128-183 (PMEPPYVIKPVCEGSSLGVIIVKENESVPSLNVVGSEWVYADTVIVEKYIPGRELT) lines the ATP pocket. 3 residues coordinate Mg(2+): Asp-253, Glu-267, and Asn-269.

It belongs to the D-alanine--D-alanine ligase family. It depends on Mg(2+) as a cofactor. Mn(2+) serves as cofactor.

It localises to the cytoplasm. The catalysed reaction is 2 D-alanine + ATP = D-alanyl-D-alanine + ADP + phosphate + H(+). It functions in the pathway cell wall biogenesis; peptidoglycan biosynthesis. In terms of biological role, cell wall formation. The polypeptide is D-alanine--D-alanine ligase (Bartonella henselae (strain ATCC 49882 / DSM 28221 / CCUG 30454 / Houston 1) (Rochalimaea henselae)).